The sequence spans 158 residues: Curculin-2 (158 aa).

Residues 1–22 form the signal peptide; that stretch reads MAAKFLLTILVTFAAVASLGMA. The region spanning 23-131 is the Bulb-type lectin domain; the sequence is DSVLLSGQTL…VLWPLGLNGC (109 aa). The cysteines at positions 51 and 74 are disulfide-linked. N-linked (GlcNAc...) asparagine glycosylation is present at N103. Residues 136–158 constitute a propeptide that is removed on maturation; that stretch reads GEITVAKDSTEPQHEDIKMVINN.

Heterodimer with curculin-1; Disulfide-linked.

Its function is as follows. Taste-modifying protein; sweet-tasting. After curculin, water elicits a sweet taste, and sour substances induce a stronger sense of sweetness. The protein is Curculin-2 of Molineria latifolia (Lumbah).